The chain runs to 551 residues: Protein GPR107 (551 aa).

The N-terminal stretch at 1-33 (MAVPVPLGRFGSFCLRLLRLLALLELLVHPVLG) is a signal peptide. Topologically, residues 40 to 262 (LKDDVRHKVH…YLSAGEIPLP (223 aa)) are extracellular. N-linked (GlcNAc...) asparagine glycosylation is found at asparagine 64 and asparagine 209. A disulfide bridge links cysteine 106 with cysteine 226. The helical transmembrane segment at 263–283 (KLYVSMALFFFLSGTIWIHIL) threads the bilayer. Topologically, residues 284 to 292 (RKRRNDVFK) are cytoplasmic. Residues 293–313 (IHWLMAALPFTKSLSLVFHAI) traverse the membrane as a helical segment. Residues 314–336 (DYHYISSQGFPIEGWAVVYYITH) lie on the Extracellular side of the membrane. A helical membrane pass occupies residues 337 to 357 (LLKGALLFITIALIGTGWAFI). Over 358-367 (KHILSDKDKK) the chain is Cytoplasmic. The helical transmembrane segment at 368-388 (IFMIVIPLQVLANVAYIIIES) threads the bilayer. Residues 389-401 (TEEGTTEYGLWKD) lie on the Extracellular side of the membrane. Residues 402–422 (SLFLVDLLCCGAILFPVVWSI) traverse the membrane as a helical segment. Residues 423–449 (RHLQEASATDGKAAINLAKLRLFRHYY) are Cytoplasmic-facing. A helical membrane pass occupies residues 450–470 (VLIVCYIYFTRIIAFLLKFAV). The Extracellular portion of the chain corresponds to 471–475 (PFQWK). Residues 476 to 495 (WLYQLLDETATLVFFVLTGY) traverse the membrane as a helical segment. The Cytoplasmic segment spans residues 496-551 (KFRPASDNPYLQLSQEDDDLEMESVVTTSGVMENMKKVKKVSNGAVEPQGSWEGTA). The residue at position 537 (serine 537) is a Phosphoserine.

The protein belongs to the LU7TM family. In terms of processing, cleaved by FURIN to yield two fragments that remain associated via a disulfide bond.

It is found in the cell membrane. The protein resides in the golgi apparatus. It localises to the trans-Golgi network membrane. Its function is as follows. Has been proposed to act as a receptor for neuronostatin, a peptide derived from the somatostatin/SST precursor. Involved in blood sugar regulation through the induction of glucagon in response to low glucose. This Mus musculus (Mouse) protein is Protein GPR107 (Gpr107).